A 391-amino-acid chain; its full sequence is MLRPGGAEEAAQLPLRRASAPVPVPSPAAPDGSRASARLGLACLLLLLLLTLPARVDTSWWYIGALGARVICDNIPGLVSRQRQLCQRYPDIMRSVGEGAREWIRECQHQFRHHRWNCTTLDRDHTVFGRVMLRSSREAAFVYAISSAGVVHAITRACSQGELSVCSCDPYTRGRHHDQRGDFDWGGCSDNIHYGVRFAKAFVDAKEKRLKDARALMNLHNNRCGRTAVRRFLKLECKCHGVSGSCTLRTCWRALSDFRRTGDYLRRRYDGAVQVMATQDGANFTAARQGYRRATRTDLVYFDNSPDYCVLDKAAGSLGTAGRVCSKTSKGTDGCEIMCCGRGYDTTRVTRVTQCECKFHWCCAVRCKECRNTVDVHTCKAPKKAEWLDQT.

Cystine bridges form between Cys107-Cys118, Cys158-Cys166, Cys168-Cys188, Cys237-Cys251, and Cys239-Cys246. Asn117 is a glycosylation site (N-linked (GlcNAc...) asparagine). A lipid anchor (O-palmitoleoyl serine; by PORCN) is attached at Ser243. The N-linked (GlcNAc...) asparagine glycan is linked to Asn283. Disulfide bonds link Cys309–Cys340, Cys325–Cys335, Cys339–Cys379, Cys355–Cys370, Cys357–Cys367, and Cys362–Cys363.

It belongs to the Wnt family. In terms of assembly, forms a soluble 1:1 complex with AFM; this prevents oligomerization and is required for prolonged biological activity. The complex with AFM may represent the physiological form in body fluids. Interacts with FZD4 and FZD5. Post-translationally, palmitoleoylation is required for efficient binding to frizzled receptors. Depalmitoleoylation leads to Wnt signaling pathway inhibition. In terms of tissue distribution, isoform 1 is expressed in adult heart, brain, placenta, lung, prostate, testis, ovary, small intestine and colon. In the adult brain, it is mainly found in the caudate nucleus, subthalamic nucleus and thalamus. Also detected in fetal brain, lung and kidney. Isoform 2 is expressed in fetal brain, fetal lung, fetal kidney, caudate nucleus, testis and cancer cell lines.

The protein resides in the secreted. The protein localises to the extracellular space. It localises to the extracellular matrix. In terms of biological role, ligand for members of the frizzled family of seven transmembrane receptors. Functions in the canonical Wnt/beta-catenin signaling pathway. Plays a redundant role in embryonic lung development. The chain is Protein Wnt-2b (WNT2B) from Homo sapiens (Human).